We begin with the raw amino-acid sequence, 144 residues long: Small ribosomal subunit protein uS12 (144 aa).

Positions 1–55 (MPTINQLVRKGREDKVVKSKSPALQKGYNSFKKSQTNQSSPQKRGVCTRVGTMTP) are disordered. Over residues 27-42 (GYNSFKKSQTNQSSPQ) the composition is skewed to polar residues. The residue at position 102 (Asp-102) is a 3-methylthioaspartic acid. The disordered stretch occupies residues 119–144 (GVNNRKQGRSKYGTKRPKPGQAAAKK). Residues 124-144 (KQGRSKYGTKRPKPGQAAAKK) are compositionally biased toward basic residues.

It belongs to the universal ribosomal protein uS12 family. In terms of assembly, part of the 30S ribosomal subunit. Contacts proteins S8 and S17. May interact with IF1 in the 30S initiation complex.

In terms of biological role, with S4 and S5 plays an important role in translational accuracy. Its function is as follows. Interacts with and stabilizes bases of the 16S rRNA that are involved in tRNA selection in the A site and with the mRNA backbone. Located at the interface of the 30S and 50S subunits, it traverses the body of the 30S subunit contacting proteins on the other side and probably holding the rRNA structure together. The combined cluster of proteins S8, S12 and S17 appears to hold together the shoulder and platform of the 30S subunit. The chain is Small ribosomal subunit protein uS12 from Brevibacillus brevis (strain 47 / JCM 6285 / NBRC 100599).